A 127-amino-acid chain; its full sequence is Small ribosomal subunit protein uS11 (127 aa).

The protein belongs to the universal ribosomal protein uS11 family. As to quaternary structure, part of the 30S ribosomal subunit. Interacts with proteins S7 and S18. Binds to IF-3.

Functionally, located on the platform of the 30S subunit, it bridges several disparate RNA helices of the 16S rRNA. Forms part of the Shine-Dalgarno cleft in the 70S ribosome. The polypeptide is Small ribosomal subunit protein uS11 (Rickettsia prowazekii (strain Madrid E)).